A 226-amino-acid chain; its full sequence is Clarin-3 (226 aa).

A helical transmembrane segment spans residues 8-28; that stretch reads LMFLSGFLTSLGSVVVICSIL. 2 N-linked (GlcNAc...) asparagine glycosylation sites follow: asparagine 46 and asparagine 83. 3 consecutive transmembrane segments (helical) span residues 92 to 112, 128 to 148, and 181 to 201; these read VVII…MFTF, GVYT…VLFV, and FWLI…IIFY.

Belongs to the clarin family.

It localises to the membrane. This Rattus norvegicus (Rat) protein is Clarin-3 (Clrn3).